Reading from the N-terminus, the 312-residue chain is Zygote arrest protein 1.L (312 aa).

2 disordered regions span residues 79-133 (RDVG…VRFP) and 150-205 (FQDK…DQTR). 2 stretches are compositionally biased toward polar residues: residues 86–95 (NPRQDASVQC) and 113–128 (PQQSPPEQGSPASPTK). The span at 152-196 (DKGENLSEKTEALRSEGSRGEGGRPEGKQEDGEIKEQTKMDKADQ) shows a compositional bias: basic and acidic residues. The segment at 214 to 297 (KYGYYHCKDC…RQDLCGRCKG (84 aa)) adopts a 3CxxC-type zinc-finger fold.

It belongs to the ZAR1 family. In terms of tissue distribution, ovary.

Its subcellular location is the cytoplasm. The protein resides in the cytoplasmic ribonucleoprotein granule. Functionally, mRNA-binding protein required for maternal mRNA storage, translation and degradation during oocyte maturation. Probably promotes formation of some phase-separated membraneless compartment that stores maternal mRNAs in oocytes: acts by undergoing liquid-liquid phase separation upon binding to maternal mRNAs. Binds to the 3'-UTR of maternal mRNAs in immature oocytes, inhibiting their translation. This Xenopus laevis (African clawed frog) protein is Zygote arrest protein 1.L.